We begin with the raw amino-acid sequence, 954 residues long: Bifunctional glutamine synthetase adenylyltransferase/adenylyl-removing enzyme (954 aa).

The interval 1-450 (MENISNKPLS…HFIETVGGRT (450 aa)) is adenylyl removase. Residues 454–954 (GADLWTQQLW…MDIYQRILVD (501 aa)) form an adenylyl transferase region.

This sequence belongs to the GlnE family. The cofactor is Mg(2+).

It carries out the reaction [glutamine synthetase]-O(4)-(5'-adenylyl)-L-tyrosine + phosphate = [glutamine synthetase]-L-tyrosine + ADP. It catalyses the reaction [glutamine synthetase]-L-tyrosine + ATP = [glutamine synthetase]-O(4)-(5'-adenylyl)-L-tyrosine + diphosphate. Functionally, involved in the regulation of glutamine synthetase GlnA, a key enzyme in the process to assimilate ammonia. When cellular nitrogen levels are high, the C-terminal adenylyl transferase (AT) inactivates GlnA by covalent transfer of an adenylyl group from ATP to specific tyrosine residue of GlnA, thus reducing its activity. Conversely, when nitrogen levels are low, the N-terminal adenylyl removase (AR) activates GlnA by removing the adenylyl group by phosphorolysis, increasing its activity. The regulatory region of GlnE binds the signal transduction protein PII (GlnB) which indicates the nitrogen status of the cell. In Shewanella woodyi (strain ATCC 51908 / MS32), this protein is Bifunctional glutamine synthetase adenylyltransferase/adenylyl-removing enzyme.